Reading from the N-terminus, the 297-residue chain is 4-hydroxy-tetrahydrodipicolinate synthase (297 aa).

Thr-47 serves as a coordination point for pyruvate. Tyr-135 functions as the Proton donor/acceptor in the catalytic mechanism. The active-site Schiff-base intermediate with substrate is Lys-163. Pyruvate is bound at residue Ile-205.

This sequence belongs to the DapA family. As to quaternary structure, homotetramer; dimer of dimers.

The protein resides in the cytoplasm. It catalyses the reaction L-aspartate 4-semialdehyde + pyruvate = (2S,4S)-4-hydroxy-2,3,4,5-tetrahydrodipicolinate + H2O + H(+). The protein operates within amino-acid biosynthesis; L-lysine biosynthesis via DAP pathway; (S)-tetrahydrodipicolinate from L-aspartate: step 3/4. Its function is as follows. Catalyzes the condensation of (S)-aspartate-beta-semialdehyde [(S)-ASA] and pyruvate to 4-hydroxy-tetrahydrodipicolinate (HTPA). This chain is 4-hydroxy-tetrahydrodipicolinate synthase, found in Dehalococcoides mccartyi (strain CBDB1).